Here is an 822-residue protein sequence, read N- to C-terminus: Putative endoplasmic reticulum metallopeptidase 1 (822 aa).

Residues 1–14 lie on the Cytoplasmic side of the membrane; that stretch reads MVLVCASSSKCKRN. A helical membrane pass occupies residues 15-35; the sequence is TFLQLAMVLFAVVMARIALYF. At 36–365 the chain is on the lumenal side; it reads HNHLDEPLVD…FNSLFFMYSK (330 aa). The N-linked (GlcNAc...) asparagine glycan is linked to N146. Zn(2+) contacts are provided by H161 and D173. Catalysis depends on E207, which acts as the Proton acceptor. Zn(2+)-binding residues include E208 and E234. The N-linked (GlcNAc...) asparagine glycan is linked to N291. H307 contacts Zn(2+). The chain crosses the membrane as a helical span at residues 366-384; the sequence is LTSKILNTLVGGLGILLTL. Topologically, residues 385-392 are cytoplasmic; it reads RGSEGSFT. The chain crosses the membrane as a helical span at residues 393 to 413; the sequence is VALIAQVISIAGIFVIPNIWA. Residues 414–431 are Lumenal-facing; sequence YILGNVLDCGMSWFRNEY. The helical transmembrane segment at 432 to 452 threads the bilayer; it reads WPLFIYLPAIFASLFFTESLF. At 453–463 the chain is on the cytoplasmic side; that stretch reads KRSEHLALRAT. The chain crosses the membrane as a helical span at residues 464 to 484; the sequence is IFIFSLLTFIPLPSAYLFTII. Residue D485 is a topological domain, lumenal. The helical transmembrane segment at 486–506 threads the bilayer; it reads FFMVFALFLNDKILAKPGTVH. Over 507-514 the chain is Cytoplasmic; sequence PLTYFIGS. Residues 515–535 traverse the membrane as a helical segment; it reads IGAMTVGFESAINLLEIFVPL. At 536-547 the chain is on the lumenal side; sequence TGRIGTDKVADN. Residues 548–568 form a helical membrane-spanning segment; sequence VVATVCVCGFNIYFPLMSPWI. At 569 to 575 the chain is on the cytoplasmic side; sequence QRFRSRC. A helical membrane pass occupies residues 576–596; sequence CFRLGLLFSIFVVGFSSFILA. Residues 597 to 822 lie on the Lumenal side of the membrane; it reads KQDTYYDSLH…GVVSGNFKLE (226 aa). N-linked (GlcNAc...) asparagine glycans are attached at residues N617, N682, N706, and N758.

The protein belongs to the peptidase M28 family. M28B subfamily. Zn(2+) serves as cofactor.

Its subcellular location is the endoplasmic reticulum membrane. The polypeptide is Putative endoplasmic reticulum metallopeptidase 1 (Schizosaccharomyces pombe (strain 972 / ATCC 24843) (Fission yeast)).